Consider the following 369-residue polypeptide: Glycolate oxidase 1 (369 aa).

Positions 1-360 (MGEITNVMEY…TRAHIYTDAD (360 aa)) constitute an FMN hydroxy acid dehydrogenase domain. Glyoxylate is bound at residue Y25. FMN is bound by residues 78–80 (PSA), S107, 128–130 (QLY), and T156. Y130 is a glyoxylate binding site. Residue R165 coordinates glyoxylate. The FMN site is built by K231 and S253. Glyoxylate-binding residues include H255 and R258. The active-site Proton acceptor is the H255. Residues 286 to 290 (DGGVR) and 309 to 310 (GR) contribute to the FMN site. Residues 367-369 (PRL) carry the Microbody targeting signal motif.

It belongs to the FMN-dependent alpha-hydroxy acid dehydrogenase family. As to quaternary structure, homotetramer. Interacts with rice dwarf virus (RDV) P8. This interaction promotes viral P8 relocation to virus factories peripheral to peroxisomes. The cofactor is FMN.

The protein localises to the peroxisome. The catalysed reaction is glycolate + O2 = glyoxylate + H2O2. Its pathway is photosynthesis; photorespiration; glycine from 2-phosphoglycolate: step 2/3. Its function is as follows. Catalyzes the oxidation of glycolate to glyoxylate, with a reduction of O2 to H2O2. Is a key enzyme in photorespiration in plants. Can exert a strong regulation over photosynthesis, possibly through a feed-back inhibition on Rubisco activase. Does not seem to play a role in oxalate accumulation. In Oryza sativa subsp. indica (Rice), this protein is Glycolate oxidase 1 (GLO1).